Reading from the N-terminus, the 305-residue chain is Protoheme IX farnesyltransferase (305 aa).

Helical transmembrane passes span 31-51, 52-72, 96-118, 123-145, 151-171, 179-199, 225-245, 247-267, and 281-301; these read VISLVIFTGFVGMWLAPYSVH, PFIAGIAVVCIALGAGSAGAI, VIESDEALSFGLITGFFAVFFMA, LLASFLLLFTIFYYICIYTIWLK, NIVIGGVSGALPPVIGYAAVS, IILFLIIFIWTPPHSWALALF, ILIYSILLFIVSLMPFFIGMN, FIYLIIAGILGVVFLYYAGSL, and FAYSIFYLFFIFLLLYSTNTI.

It belongs to the UbiA prenyltransferase family. Protoheme IX farnesyltransferase subfamily.

The protein resides in the cell inner membrane. The enzyme catalyses heme b + (2E,6E)-farnesyl diphosphate + H2O = Fe(II)-heme o + diphosphate. Its pathway is porphyrin-containing compound metabolism; heme O biosynthesis; heme O from protoheme: step 1/1. Converts heme B (protoheme IX) to heme O by substitution of the vinyl group on carbon 2 of heme B porphyrin ring with a hydroxyethyl farnesyl side group. This is Protoheme IX farnesyltransferase from Rickettsia massiliae (strain Mtu5).